We begin with the raw amino-acid sequence, 221 residues long: Thyrotroph embryonic factor (221 aa).

The tract at residues Glu-72–Cys-116 is disordered. Residues Ser-73–Ser-100 show a composition bias toward low complexity. The 49-residue stretch at Asp-173–Asp-221 folds into the bZIP domain. The basic motif stretch occupies residues Lys-175 to Arg-195. The leucine-zipper stretch occupies residues Leu-196–Ile-203.

The protein belongs to the bZIP family. PAR subfamily. In terms of assembly, binds DNA as a homodimer or a heterodimer. Can form a heterodimer with DBP.

Its subcellular location is the nucleus. Its function is as follows. Transcription factor that binds to and transactivates the TSHB promoter. Binds to a minimal DNA-binding sequence 5'-[TC][AG][AG]TTA[TC][AG]-3'. This is Thyrotroph embryonic factor (TEF) from Phodopus sungorus (Striped hairy-footed hamster).